Reading from the N-terminus, the 89-residue chain is Small ribosomal subunit protein uS15 (89 aa).

This sequence belongs to the universal ribosomal protein uS15 family. Part of the 30S ribosomal subunit. Forms a bridge to the 50S subunit in the 70S ribosome, contacting the 23S rRNA.

One of the primary rRNA binding proteins, it binds directly to 16S rRNA where it helps nucleate assembly of the platform of the 30S subunit by binding and bridging several RNA helices of the 16S rRNA. Functionally, forms an intersubunit bridge (bridge B4) with the 23S rRNA of the 50S subunit in the ribosome. The chain is Small ribosomal subunit protein uS15 from Chlamydia felis (strain Fe/C-56) (Chlamydophila felis).